Consider the following 306-residue polypeptide: Homeobox protein Hox-C13a (306 aa).

The homeobox DNA-binding region spans 236 to 295 (GRKKRVPYTKIQLKELEKEYAASKFITKDKRRRISATTNLSERQVTIWFQNRRVKEKKFV).

The protein belongs to the Abd-B homeobox family.

The protein resides in the nucleus. Its function is as follows. Sequence-specific transcription factor which is part of a developmental regulatory system that provides cells with specific positional identities on the anterior-posterior axis. The protein is Homeobox protein Hox-C13a (hoxc13a) of Danio rerio (Zebrafish).